Consider the following 42-residue polypeptide: MSNVGTSGRIPLWLVGTVAGILVLGLVGLFFYGSYVGLGSSL.

Residues 10 to 30 (IPLWLVGTVAGILVLGLVGLF) form a helical membrane-spanning segment.

Belongs to the PsbJ family. In terms of assembly, PSII is composed of 1 copy each of membrane proteins PsbA, PsbB, PsbC, PsbD, PsbE, PsbF, PsbH, PsbI, PsbJ, PsbK, PsbL, PsbM, PsbT, PsbX, PsbY, PsbZ, Psb30/Ycf12, at least 3 peripheral proteins of the oxygen-evolving complex and a large number of cofactors. It forms dimeric complexes.

The protein resides in the plastid. Its subcellular location is the chloroplast thylakoid membrane. Functionally, one of the components of the core complex of photosystem II (PSII). PSII is a light-driven water:plastoquinone oxidoreductase that uses light energy to abstract electrons from H(2)O, generating O(2) and a proton gradient subsequently used for ATP formation. It consists of a core antenna complex that captures photons, and an electron transfer chain that converts photonic excitation into a charge separation. The protein is Photosystem II reaction center protein J of Staurastrum punctulatum (Green alga).